Consider the following 506-residue polypeptide: Tyrosine-protein kinase isoform SRK4 (506 aa).

2 stretches are compositionally biased toward polar residues: residues 1–10 (MGSCCSSQDG) and 18–31 (AGST…SQSV). Residues 1-53 (MGSCCSSQDGDGNGKATAGSTVDSHELSQSVKGKIKQPEPKPKPPPQVPPAQD) form a disordered region. An SH3 domain is found at 54–116 (VKYPIYVGKY…PSNYVAEYKS (63 aa)). The region spanning 122-214 (WFFGQVKRVD…GLCVNLKGPC (93 aa)) is the SH2 domain. Residues 240–493 (IKLLRGLGAG…TLSWQLEEFF (254 aa)) enclose the Protein kinase domain. ATP-binding positions include 246–254 (LGAGQFGEV) and K268. D359 acts as the Proton acceptor in catalysis.

The protein belongs to the protein kinase superfamily. Tyr protein kinase family.

The protein localises to the cytoplasm. The catalysed reaction is L-tyrosyl-[protein] + ATP = O-phospho-L-tyrosyl-[protein] + ADP + H(+). The chain is Tyrosine-protein kinase isoform SRK4 (SRK1) from Spongilla lacustris (Freshwater sponge).